The chain runs to 486 residues: Cysteine--tRNA ligase (486 aa).

Cys27 contributes to the Zn(2+) binding site. A 'HIGH' region motif is present at residues 29 to 39 (PTTYNFIHLGN). Residues Cys207, His232, and Glu236 each contribute to the Zn(2+) site. Residues 264 to 268 (KMSKS) carry the 'KMSKS' region motif. Lys267 contributes to the ATP binding site.

It belongs to the class-I aminoacyl-tRNA synthetase family. As to quaternary structure, monomer. Zn(2+) serves as cofactor.

The protein resides in the cytoplasm. It carries out the reaction tRNA(Cys) + L-cysteine + ATP = L-cysteinyl-tRNA(Cys) + AMP + diphosphate. The sequence is that of Cysteine--tRNA ligase from Desulforamulus reducens (strain ATCC BAA-1160 / DSM 100696 / MI-1) (Desulfotomaculum reducens).